A 691-amino-acid chain; its full sequence is Methionine--tRNA ligase (691 aa).

The 'HIGH' region motif lies at 14–24 (PYANGPFHLGH). Zn(2+)-binding residues include Cys-148, Cys-151, Cys-161, and Cys-164. The 'KMSKS' region signature appears at 344-348 (KMSKS). Residue Lys-347 participates in ATP binding. Positions 585–691 (DFDRVDLRVA…PGAKPGMRVR (107 aa)) constitute a tRNA-binding domain.

This sequence belongs to the class-I aminoacyl-tRNA synthetase family. MetG type 1 subfamily. Homodimer. Zn(2+) is required as a cofactor.

It is found in the cytoplasm. It carries out the reaction tRNA(Met) + L-methionine + ATP = L-methionyl-tRNA(Met) + AMP + diphosphate. Is required not only for elongation of protein synthesis but also for the initiation of all mRNA translation through initiator tRNA(fMet) aminoacylation. The sequence is that of Methionine--tRNA ligase from Verminephrobacter eiseniae (strain EF01-2).